The sequence spans 219 residues: Protein-L-isoaspartate O-methyltransferase (219 aa).

S60 is a catalytic residue.

The protein belongs to the methyltransferase superfamily. L-isoaspartyl/D-aspartyl protein methyltransferase family.

It is found in the cytoplasm. The enzyme catalyses [protein]-L-isoaspartate + S-adenosyl-L-methionine = [protein]-L-isoaspartate alpha-methyl ester + S-adenosyl-L-homocysteine. Functionally, catalyzes the methyl esterification of L-isoaspartyl residues in peptides and proteins that result from spontaneous decomposition of normal L-aspartyl and L-asparaginyl residues. It plays a role in the repair and/or degradation of damaged proteins. The protein is Protein-L-isoaspartate O-methyltransferase of Rhodospirillum rubrum (strain ATCC 11170 / ATH 1.1.1 / DSM 467 / LMG 4362 / NCIMB 8255 / S1).